A 634-amino-acid chain; its full sequence is Chaperone protein DnaK (634 aa).

Thr-199 is modified (phosphothreonine; by autocatalysis). A compositionally biased stretch (low complexity) spans 601–618 (AAAGQAQAESGAGAQGNA). The interval 601–634 (AAAGQAQAESGAGAQGNAKPDDVVDAEFEEVDKK) is disordered. Residues 623–634 (VVDAEFEEVDKK) are compositionally biased toward acidic residues.

The protein belongs to the heat shock protein 70 family.

In terms of biological role, acts as a chaperone. This Acidithiobacillus ferrooxidans (strain ATCC 23270 / DSM 14882 / CIP 104768 / NCIMB 8455) (Ferrobacillus ferrooxidans (strain ATCC 23270)) protein is Chaperone protein DnaK.